Consider the following 294-residue polypeptide: Probable cobalamin biosynthesis protein CobD (294 aa).

Helical transmembrane passes span 52 to 72, 73 to 93, 145 to 165, and 268 to 288; these read AGLLTALVVITFAFLLSIVPF, YAPFPLNYFLAAYLLKSSFAI, DSVVAPLFYFLLFGLQGAVIY, and IYWLVVTGWVIVVVLLLATGV.

The protein belongs to the CobD/CbiB family.

It is found in the cell membrane. Its pathway is cofactor biosynthesis; adenosylcobalamin biosynthesis. Converts cobyric acid to cobinamide by the addition of aminopropanol on the F carboxylic group. In Thermococcus kodakarensis (strain ATCC BAA-918 / JCM 12380 / KOD1) (Pyrococcus kodakaraensis (strain KOD1)), this protein is Probable cobalamin biosynthesis protein CobD.